Here is a 548-residue protein sequence, read N- to C-terminus: Acetamidase (548 aa).

Residues K129 and S204 each act as charge relay system in the active site. The Acyl-ester intermediate role is filled by S228.

Belongs to the amidase family.

It carries out the reaction a monocarboxylic acid amide + H2O = a monocarboxylate + NH4(+). The enzyme catalyses acetamide + H2O = acetate + NH4(+). In terms of biological role, allows acetamide to be used as a sole carbon or nitrogen source. The polypeptide is Acetamidase (amdS) (Emericella nidulans (strain FGSC A4 / ATCC 38163 / CBS 112.46 / NRRL 194 / M139) (Aspergillus nidulans)).